A 636-amino-acid chain; its full sequence is DNA-directed RNA polymerase subunit beta' (636 aa).

Residues cysteine 70, cysteine 72, cysteine 85, and cysteine 88 each contribute to the Zn(2+) site. 3 residues coordinate Mg(2+): aspartate 471, aspartate 473, and aspartate 475.

Belongs to the RNA polymerase beta' chain family. RpoC1 subfamily. Requires Mg(2+) as cofactor. The cofactor is Zn(2+).

Its subcellular location is the plastid. The protein resides in the cyanelle. The catalysed reaction is RNA(n) + a ribonucleoside 5'-triphosphate = RNA(n+1) + diphosphate. Functionally, DNA-dependent RNA polymerase catalyzes the transcription of DNA into RNA using the four ribonucleoside triphosphates as substrates. This is DNA-directed RNA polymerase subunit beta' from Cyanophora paradoxa.